A 427-amino-acid polypeptide reads, in one-letter code: 3-phosphoshikimate 1-carboxyvinyltransferase (427 aa).

Residues Lys-22, Ser-23, and Arg-27 each coordinate 3-phosphoshikimate. Lys-22 is a phosphoenolpyruvate binding site. Residues Gly-96 and Arg-124 each coordinate phosphoenolpyruvate. 3-phosphoshikimate contacts are provided by Ser-169, Ser-170, Gln-171, Ser-197, Asp-313, Asn-336, and Lys-340. Residue Gln-171 participates in phosphoenolpyruvate binding. Catalysis depends on Asp-313, which acts as the Proton acceptor. 3 residues coordinate phosphoenolpyruvate: Arg-344, Arg-386, and Lys-411.

This sequence belongs to the EPSP synthase family. Monomer.

It localises to the cytoplasm. It catalyses the reaction 3-phosphoshikimate + phosphoenolpyruvate = 5-O-(1-carboxyvinyl)-3-phosphoshikimate + phosphate. Its pathway is metabolic intermediate biosynthesis; chorismate biosynthesis; chorismate from D-erythrose 4-phosphate and phosphoenolpyruvate: step 6/7. Functionally, catalyzes the transfer of the enolpyruvyl moiety of phosphoenolpyruvate (PEP) to the 5-hydroxyl of shikimate-3-phosphate (S3P) to produce enolpyruvyl shikimate-3-phosphate and inorganic phosphate. The chain is 3-phosphoshikimate 1-carboxyvinyltransferase from Salmonella paratyphi A (strain ATCC 9150 / SARB42).